The primary structure comprises 184 residues: ATP synthase subunit b, chloroplastic (184 aa).

A helical membrane pass occupies residues 27 to 49 (LATNPINLSVVLGVLVFFGKGVL).

The protein belongs to the ATPase B chain family. As to quaternary structure, F-type ATPases have 2 components, F(1) - the catalytic core - and F(0) - the membrane proton channel. F(1) has five subunits: alpha(3), beta(3), gamma(1), delta(1), epsilon(1). F(0) has four main subunits: a(1), b(1), b'(1) and c(10-14). The alpha and beta chains form an alternating ring which encloses part of the gamma chain. F(1) is attached to F(0) by a central stalk formed by the gamma and epsilon chains, while a peripheral stalk is formed by the delta, b and b' chains.

Its subcellular location is the plastid. It is found in the chloroplast thylakoid membrane. In terms of biological role, f(1)F(0) ATP synthase produces ATP from ADP in the presence of a proton or sodium gradient. F-type ATPases consist of two structural domains, F(1) containing the extramembraneous catalytic core and F(0) containing the membrane proton channel, linked together by a central stalk and a peripheral stalk. During catalysis, ATP synthesis in the catalytic domain of F(1) is coupled via a rotary mechanism of the central stalk subunits to proton translocation. Its function is as follows. Component of the F(0) channel, it forms part of the peripheral stalk, linking F(1) to F(0). This Phaseolus vulgaris (Kidney bean) protein is ATP synthase subunit b, chloroplastic.